The following is a 571-amino-acid chain: Cerebral cavernous malformations 2 protein-like (571 aa).

3 disordered regions span residues 164–193 (AGVD…GTAE), 212–295 (AEAR…PQDP), and 544–571 (LAPD…DNYL). Residues 184–193 (PEKRRVGTAE) show a composition bias toward basic and acidic residues. The segment covering 212–223 (AEARAGGGGGGS) has biased composition (gly residues). The segment covering 237–251 (WERRQTFSGSWERRH) has biased composition (basic and acidic residues). The span at 253–264 (GGGGGGGAGKPG) shows a compositional bias: gly residues. Pro residues predominate over residues 286–295 (GPNPLDPQDP). Acidic residues predominate over residues 545 to 555 (APDDDDDDEDE).

Belongs to the CCM2 family.

The chain is Cerebral cavernous malformations 2 protein-like (CCM2L) from Homo sapiens (Human).